The chain runs to 347 residues: Haptoglobin (347 aa).

An N-terminal signal peptide occupies residues 1 to 18; it reads MRALGAVVTLLLWGQLFA. Positions 31–88 constitute a Sushi domain; that stretch reads DSCPKPPEIANGYVEHLVRYRCRQFYRLRTEGDGVYTLNDEKQWVNTAAGEKLPECEA. 4 cysteine pairs are disulfide-bonded: C52–C86, C90–C207, C250–C281, and C292–C322. One can recognise a Peptidase S1 domain in the interval 103–345; it reads IIGGSMDAKG…LKDWVQETMA (243 aa). N148, N182, N256, and N264 each carry an N-linked (GlcNAc...) asparagine glycan. Residues 259–264 form an interaction with CD163 region; that stretch reads VPEKKN.

This sequence belongs to the peptidase S1 family. In terms of assembly, tetramer of two alpha and two beta chains; disulfide-linked. The hemoglobin/haptoglobin complex is composed of a haptoglobin dimer bound to two hemoglobin alpha-beta dimers. Interacts with CD163. Interacts with ERGIC3. Expressed by the liver and secreted in plasma.

It localises to the secreted. In terms of biological role, as a result of hemolysis, hemoglobin is found to accumulate in the kidney and is secreted in the urine. Haptoglobin captures, and combines with free plasma hemoglobin to allow hepatic recycling of heme iron and to prevent kidney damage. Haptoglobin also acts as an antioxidant, has antibacterial activity and plays a role in modulating many aspects of the acute phase response. Hemoglobin/haptoglobin complexes are rapidly cleared by the macrophage CD163 scavenger receptor expressed on the surface of liver Kupfer cells through an endocytic lysosomal degradation pathway. The polypeptide is Haptoglobin (Hp) (Mus saxicola (Brown spiny mouse)).